A 36-amino-acid chain; its full sequence is Glucagon-1 (36 aa).

Belongs to the glucagon family.

Its subcellular location is the secreted. In terms of biological role, promotes hydrolysis of glycogen and lipids, and raises the blood sugar level. The sequence is that of Glucagon-1 (gcg1) from Oreochromis niloticus (Nile tilapia).